Here is a 376-residue protein sequence, read N- to C-terminus: Serpin B9 (376 aa).

Methionine 1 bears the N-acetylmethionine mark.

Belongs to the serpin family. Ov-serpin subfamily.

It localises to the cytoplasm. Functionally, granzyme B inhibitor. The protein is Serpin B9 (SERPINB9) of Homo sapiens (Human).